Here is a 274-residue protein sequence, read N- to C-terminus: Large ribosomal subunit protein uL2 (274 aa).

Residues 224 to 274 form a disordered region; sequence VMNPVDHPHGGGEGRSPIGRNPVTPWGKPALGARTRKKKPGDRLIVKRRAR. Residues 257–274 show a composition bias toward basic residues; sequence RTRKKKPGDRLIVKRRAR.

The protein belongs to the universal ribosomal protein uL2 family. Part of the 50S ribosomal subunit. Forms a bridge to the 30S subunit in the 70S ribosome.

In terms of biological role, one of the primary rRNA binding proteins. Required for association of the 30S and 50S subunits to form the 70S ribosome, for tRNA binding and peptide bond formation. It has been suggested to have peptidyltransferase activity; this is somewhat controversial. Makes several contacts with the 16S rRNA in the 70S ribosome. The polypeptide is Large ribosomal subunit protein uL2 (Pelotomaculum thermopropionicum (strain DSM 13744 / JCM 10971 / SI)).